Here is a 96-residue protein sequence, read N- to C-terminus: MSRRCELTGKAVLTGHLVSHSNRKTKRRFLPNLCNVTLLSDTLGRSVRLRISANALRSVEHRGGLDAFLVKAGEQDLSQNARLLKREIEKKLAAAA.

Belongs to the bacterial ribosomal protein bL28 family.

This is Large ribosomal subunit protein bL28 from Methylobacterium sp. (strain 4-46).